Here is a 283-residue protein sequence, read N- to C-terminus: Beta-glucoside operon antiterminator (283 aa).

PRD domains follow at residues 65–170 (RIPL…SHMP) and 171–280 (EVMR…LQEQ).

It belongs to the transcriptional antiterminator BglG family. Post-translationally, phosphorylated and inactivated by ArbF (EII-Bgl). The degree of phosphorylation is dependent on the presence or absence of beta-glucosides which act as inducers of the operon expression. Addition of inducer result in the rapid dephosphorylation of ArbG.

In terms of biological role, mediates the positive regulation of the beta-glucoside (arb) operon by functioning as a transcriptional antiterminator. This is an RNA-binding protein that recognizes a specific sequence located just upstream of two termination sites within the operon. This chain is Beta-glucoside operon antiterminator (arbG), found in Dickeya chrysanthemi (Pectobacterium chrysanthemi).